The sequence spans 273 residues: Protein INAPERTURATE POLLEN1 (273 aa).

One can recognise a DOG1 domain in the interval 12–267; sequence SRRFNDFYED…KDQILLQDFE (256 aa).

As to expression, expressed only in anthers and in pollen. Not detected in other flower tissues, stems, leaves and siliques.

Its subcellular location is the cytoplasm. Its function is as follows. Required for the formation of pollen surface apertures, which arise by restriction of exine deposition at specific sites. The aperture length depends on the INP1 dosage. Does not play a role in specifying the number or position of apertures. Acts in a sporophytic manner. The polypeptide is Protein INAPERTURATE POLLEN1 (Arabidopsis thaliana (Mouse-ear cress)).